We begin with the raw amino-acid sequence, 549 residues long: Probable acyl-activating enzyme 10 (549 aa).

This sequence belongs to the ATP-dependent AMP-binding enzyme family. In terms of tissue distribution, expressed at low levels in roots.

In terms of biological role, may act as an acid--thiol ligase that activates carboxylic acids by forming acyl-CoAs. This Arabidopsis thaliana (Mouse-ear cress) protein is Probable acyl-activating enzyme 10 (AEE10).